The chain runs to 156 residues: Transcription antitermination protein NusB (156 aa).

This sequence belongs to the NusB family.

In terms of biological role, involved in transcription antitermination. Required for transcription of ribosomal RNA (rRNA) genes. Binds specifically to the boxA antiterminator sequence of the ribosomal RNA (rrn) operons. The sequence is that of Transcription antitermination protein NusB from Rickettsia massiliae (strain Mtu5).